The chain runs to 89 residues: Large ribosomal subunit protein bL31B (89 aa).

It belongs to the bacterial ribosomal protein bL31 family. Type B subfamily. Part of the 50S ribosomal subunit.

The sequence is that of Large ribosomal subunit protein bL31B from Aeromonas hydrophila subsp. hydrophila (strain ATCC 7966 / DSM 30187 / BCRC 13018 / CCUG 14551 / JCM 1027 / KCTC 2358 / NCIMB 9240 / NCTC 8049).